Reading from the N-terminus, the 400-residue chain is NADPH dehydrogenase 2 (400 aa).

2 residues coordinate FMN: T38 and Q115. The substrate site is built by H192 and N195. Y197 functions as the Proton donor in the catalytic mechanism. 2 residues coordinate FMN: R244 and R349. S353 is subject to Phosphoserine. Residue Y376 participates in substrate binding. A Phosphoserine modification is found at S379.

The protein belongs to the NADH:flavin oxidoreductase/NADH oxidase family. As to quaternary structure, homodimer or heterodimer with OYE3. It depends on FMN as a cofactor.

The protein localises to the cytoplasm. The protein resides in the nucleus. Its subcellular location is the mitochondrion. It catalyses the reaction A + NADPH + H(+) = AH2 + NADP(+). Its function is as follows. Flavin-dependent enoate reductase that catalyzes the chemo- and stereoslective hydrogenation of electron-poor alkenes. The enzyme is reduced by NADPH, and oxygen, quinones, and alpha,beta-unsaturated aldehydes and ketones can act as electron acceptors to complete catalytic turnover. The physiological oxidant remains elusive. Has an antioxidant activity, reducing reactive oxygen species (ROS) levels when overexpressed. Formation of OYE2-OYE3 heterodimers contribute to the induction of programmed cell death upon oxidative stress. The polypeptide is NADPH dehydrogenase 2 (Saccharomyces cerevisiae (strain ATCC 204508 / S288c) (Baker's yeast)).